A 253-amino-acid polypeptide reads, in one-letter code: tRNA-cytidine(32) 2-sulfurtransferase 2 (253 aa).

Positions 33–38 match the PP-loop motif motif; the sequence is SGGKDS. Residues Cys108, Cys111, and Cys199 each coordinate [4Fe-4S] cluster.

The protein belongs to the TtcA family. Homodimer. Mg(2+) serves as cofactor. The cofactor is [4Fe-4S] cluster.

Its subcellular location is the cytoplasm. It carries out the reaction cytidine(32) in tRNA + S-sulfanyl-L-cysteinyl-[cysteine desulfurase] + AH2 + ATP = 2-thiocytidine(32) in tRNA + L-cysteinyl-[cysteine desulfurase] + A + AMP + diphosphate + H(+). The protein operates within tRNA modification. Its function is as follows. Catalyzes the ATP-dependent 2-thiolation of cytidine in position 32 of tRNA, to form 2-thiocytidine (s(2)C32). The sulfur atoms are provided by the cysteine/cysteine desulfurase (IscS) system. This chain is tRNA-cytidine(32) 2-sulfurtransferase 2, found in Francisella tularensis subsp. novicida (strain U112).